We begin with the raw amino-acid sequence, 161 residues long: Spermidine N(1)-acetyltransferase (161 aa).

An N-acetyltransferase domain is found at 3 to 160 (IEIRKLSIED…SDFIMEKKYE (158 aa)). Acetyl-CoA contacts are provided by residues 92-94 (LYL), 99-104 (THKKIG), asparagine 131, and serine 136. Catalysis depends on tyrosine 138, which acts as the Proton donor. Lysine 140 contacts acetyl-CoA.

The protein belongs to the acetyltransferase family. In terms of assembly, monomer or homodimer.

It carries out the reaction an alkane-alpha,omega-diamine + acetyl-CoA = an N-acetylalkane-alpha,omega-diamine + CoA + H(+). In terms of biological role, involved in the protection against polyamine toxicity by regulating their concentration. Could also be involved in the negative control of sporulation as well as production of degradative enzymes such as alpha-amylase, levansucrase and alkaline phosphatase. Catalyzes the transfer of an acetyl group from acetyl coenzyme A (AcCoA) to an acceptor substrate and release both CoA and the acetylated product. It can use a variety of substrates including spermidine, L-tryptophan, L-leucine, L-lysine, dopamine and tyramine. This chain is Spermidine N(1)-acetyltransferase, found in Thermoplasma acidophilum (strain ATCC 25905 / DSM 1728 / JCM 9062 / NBRC 15155 / AMRC-C165).